The sequence spans 195 residues: Cytochrome c oxidase assembly protein CtaG (195 aa).

Residues 1–9 lie on the Cytoplasmic side of the membrane; the sequence is MALNGPQKT. The helical; Signal-anchor for type II membrane protein transmembrane segment at 10–30 threads the bilayer; the sequence is VVQLVGVVVLMGGLAWASVPF. At 31–195 the chain is on the periplasmic side; that stretch reads YDWFCRVTGF…DTSGAETELN (165 aa).

It belongs to the COX11/CtaG family.

The protein localises to the cell inner membrane. Exerts its effect at some terminal stage of cytochrome c oxidase synthesis, probably by being involved in the insertion of the copper B into subunit I. The sequence is that of Cytochrome c oxidase assembly protein CtaG from Ruegeria sp. (strain TM1040) (Silicibacter sp.).